Here is an 80-residue protein sequence, read N- to C-terminus: Exodeoxyribonuclease 7 small subunit (80 aa).

Belongs to the XseB family. In terms of assembly, heterooligomer composed of large and small subunits.

The protein resides in the cytoplasm. The catalysed reaction is Exonucleolytic cleavage in either 5'- to 3'- or 3'- to 5'-direction to yield nucleoside 5'-phosphates.. In terms of biological role, bidirectionally degrades single-stranded DNA into large acid-insoluble oligonucleotides, which are then degraded further into small acid-soluble oligonucleotides. This is Exodeoxyribonuclease 7 small subunit from Aliivibrio salmonicida (strain LFI1238) (Vibrio salmonicida (strain LFI1238)).